Reading from the N-terminus, the 209-residue chain is Ribosomal RNA large subunit methyltransferase E (209 aa).

S-adenosyl-L-methionine contacts are provided by Gly63, Trp65, Asp83, Asp99, and Asp124. Lys164 functions as the Proton acceptor in the catalytic mechanism.

Belongs to the class I-like SAM-binding methyltransferase superfamily. RNA methyltransferase RlmE family.

The protein localises to the cytoplasm. It carries out the reaction uridine(2552) in 23S rRNA + S-adenosyl-L-methionine = 2'-O-methyluridine(2552) in 23S rRNA + S-adenosyl-L-homocysteine + H(+). Its function is as follows. Specifically methylates the uridine in position 2552 of 23S rRNA at the 2'-O position of the ribose in the fully assembled 50S ribosomal subunit. This chain is Ribosomal RNA large subunit methyltransferase E, found in Shewanella halifaxensis (strain HAW-EB4).